We begin with the raw amino-acid sequence, 1410 residues long: Pogo transposable element with ZNF domain (1410 aa).

The segment at 238–291 is disordered; it reads RSTVPQSQSQQTKSTPSTSTTPTATQPTSLGQLAVQSPGQSNQTTNPKLAPSFP. Positions 239-266 are enriched in low complexity; the sequence is STVPQSQSQQTKSTPSTSTTPTATQPTS. Polar residues predominate over residues 267-284; that stretch reads LGQLAVQSPGQSNQTTNP. A Glycyl lysine isopeptide (Lys-Gly) (interchain with G-Cter in SUMO2) cross-link involves residue lysine 319. Residues 332–361 are disordered; that stretch reads QSPGPVVVSNNSSAHGSQRTSGPESSMKVT. Position 333 is a phosphoserine (serine 333). Residues 345-361 are compositionally biased toward polar residues; the sequence is AHGSQRTSGPESSMKVT. Residue lysine 359 forms a Glycyl lysine isopeptide (Lys-Gly) (interchain with G-Cter in SUMO2) linkage. Phosphoserine is present on serine 363. A C2H2-type 1; atypical zinc finger spans residues 375-397; the sequence is KICPRCNAQFRVTEALRGHMCYC. The tract at residues 409 to 456 is disordered; it reads KSLDSEPSVPSAAKPPSPEKTAPVASTPSSTPIPALSPPTKVPEPNEN. A Glycyl lysine isopeptide (Lys-Gly) (interchain with G-Cter in SUMO2) cross-link involves residue lysine 422. Serine 425 is modified (phosphoserine). Threonine 439 bears the Phosphothreonine mark. Phosphoserine is present on serine 445. Lysine 449 participates in a covalent cross-link: Glycyl lysine isopeptide (Lys-Gly) (interchain with G-Cter in SUMO2). Threonine 463 is subject to Phosphothreonine. Lysine 489 participates in a covalent cross-link: Glycyl lysine isopeptide (Lys-Gly) (interchain with G-Cter in SUMO2). 6 C2H2-type zinc fingers span residues 494–516, 530–553, 560–583, 590–613, 619–641, and 647–670; these read FRCP…MKHH, TICQ…ENVH, TKCK…KDTH, YVCQ…RMIH, LLCP…YMRH, and YHCN…LQHH. A Glycyl lysine isopeptide (Lys-Gly) (interchain with G-Cter in SUMO2) cross-link involves residue lysine 629. A Glycyl lysine isopeptide (Lys-Gly) (interchain with G-Cter in SUMO2) cross-link involves residue lysine 677. Residues 693 to 715 are disordered; the sequence is SRGQPRTVPVSSNDTPPSALQEA. Over residues 701-710 the composition is skewed to polar residues; sequence PVSSNDTPPS. A C2H2-type 8 zinc finger spans residues 771-794; it reads VHCSLCRYSTCCSRAYANHMINNH. Lysine 801 participates in a covalent cross-link: Glycyl lysine isopeptide (Lys-Gly) (interchain with G-Cter in SUMO2). The required for interaction with CBX5 stretch occupies residues 810-850; sequence VSGIKLACTSCTFVTSVGDAMAKHLVFNPSHRSSSILPRGL. The C2H2-type 9 zinc-finger motif lies at 815-840; sequence LACTSCTFVTSVGDAMAKHLVFNPSH. Serine 856 is subject to Phosphoserine. 2 disordered regions span residues 857–927 and 942–969; these read RHGQ…PQAL and VDDQ…GVGK. Positions 860-870 are enriched in basic and acidic residues; that stretch reads QTRDRVHDRNV. Lysine 883 is covalently cross-linked (Glycyl lysine isopeptide (Lys-Gly) (interchain with G-Cter in SUMO2)). A compositionally biased stretch (low complexity) spans 892–915; it reads ATPAEPEELLTPLAPALPSPASTA. Positions 1015-1085 constitute an HTH CENPB-type domain; it reads GENLEGKYLS…MLRHHLTPHA (71 aa). Residues 1117–1323 form the DDE-1 domain; sequence LPLSMIVAID…DCPELVQRSF (207 aa). A Phosphoserine modification is found at serine 1338. A coiled-coil region spans residues 1340–1360; it reads TRNADMQEELIASLEEQLKLS. The disordered stretch occupies residues 1360-1400; the sequence is SGEHSESSTPRPRSSPEETIEPESLHQLFEGESETESFYGF. Phosphoserine is present on residues serine 1364 and serine 1367. A Phosphothreonine modification is found at threonine 1368. Residues serine 1373 and serine 1374 each carry the phosphoserine modification. Threonine 1378 carries the phosphothreonine modification. The Integrase domain-binding motif (IBM) signature appears at 1380–1404; the sequence is EPESLHQLFEGESETESFYGFEEAD. Residue serine 1392 is modified to Phosphoserine; by CK2. Threonine 1394 is subject to Phosphothreonine. Serine 1396 is subject to Phosphoserine; by CK2.

In terms of assembly, interacts with CBX1, CBX3, MAD2L2 and CHAMP1. Interacts with CBX5; POGZ competes with PXVXL motif-containing proteins such as INCENP and TRIM28 for interaction with CBX5. Interacts (via IBM motif) with PSIP1 isoform 1 (via IBD domain); phosphorylation increases its affinity for PSIP1. Interacts with HDGFL2. Post-translationally, phosphorylation increases its interaction with PSIP1.

It is found in the nucleus. It localises to the chromosome. Its subcellular location is the cytoplasm. In terms of biological role, plays a role in mitotic cell cycle progression and is involved in kinetochore assembly and mitotic sister chromatid cohesion. Probably through its association with CBX5 plays a role in mitotic chromosome segregation by regulating aurora kinase B/AURKB activation and AURKB and CBX5 dissociation from chromosome arms. Promotes the repair of DNA double-strand breaks through the homologous recombination pathway. The chain is Pogo transposable element with ZNF domain (POGZ) from Homo sapiens (Human).